The primary structure comprises 143 residues: Putative transcriptional regulatory protein PH0763 (143 aa).

This sequence belongs to the Tfx family.

In terms of biological role, putative transcriptional regulator. This Pyrococcus horikoshii (strain ATCC 700860 / DSM 12428 / JCM 9974 / NBRC 100139 / OT-3) protein is Putative transcriptional regulatory protein PH0763.